The primary structure comprises 1503 residues: DNA-directed RNA polymerase subunit beta' (1503 aa).

Zn(2+) contacts are provided by Cys-60, Cys-62, Cys-75, and Cys-78. Mg(2+) is bound by residues Asp-626, Asp-628, and Asp-630. Zn(2+)-binding residues include Cys-1002, Cys-1075, Cys-1082, and Cys-1085. Positions Glu-1439–Phe-1503 are disordered. Positions Gly-1486–Phe-1503 are enriched in acidic residues.

This sequence belongs to the RNA polymerase beta' chain family. In terms of assembly, the RNAP catalytic core consists of 2 alpha, 1 beta, 1 beta' and 1 omega subunit. When a sigma factor is associated with the core the holoenzyme is formed, which can initiate transcription. Requires Mg(2+) as cofactor. The cofactor is Zn(2+).

The catalysed reaction is RNA(n) + a ribonucleoside 5'-triphosphate = RNA(n+1) + diphosphate. DNA-dependent RNA polymerase catalyzes the transcription of DNA into RNA using the four ribonucleoside triphosphates as substrates. This chain is DNA-directed RNA polymerase subunit beta', found in Chloroflexus aurantiacus (strain ATCC 29364 / DSM 637 / Y-400-fl).